Consider the following 378-residue polypeptide: Succinate--CoA ligase [ADP-forming] subunit beta (378 aa).

In terms of domain architecture, ATP-grasp spans arginine 9–lysine 237. ATP contacts are provided by residues lysine 45, glycine 52–glycine 54, isoleucine 94, and glutamate 99. Residues asparagine 192 and aspartate 206 each contribute to the Mg(2+) site. Residues asparagine 257 and glycine 314–threonine 316 contribute to the substrate site.

Belongs to the succinate/malate CoA ligase beta subunit family. As to quaternary structure, heterotetramer of two alpha and two beta subunits. Mg(2+) serves as cofactor.

It carries out the reaction succinate + ATP + CoA = succinyl-CoA + ADP + phosphate. The enzyme catalyses GTP + succinate + CoA = succinyl-CoA + GDP + phosphate. Its pathway is carbohydrate metabolism; tricarboxylic acid cycle; succinate from succinyl-CoA (ligase route): step 1/1. Functionally, succinyl-CoA synthetase functions in the citric acid cycle (TCA), coupling the hydrolysis of succinyl-CoA to the synthesis of either ATP or GTP and thus represents the only step of substrate-level phosphorylation in the TCA. The beta subunit provides nucleotide specificity of the enzyme and binds the substrate succinate, while the binding sites for coenzyme A and phosphate are found in the alpha subunit. The sequence is that of Succinate--CoA ligase [ADP-forming] subunit beta from Herpetosiphon aurantiacus (strain ATCC 23779 / DSM 785 / 114-95).